The sequence spans 217 residues: GTP cyclohydrolase 1 (217 aa).

Residues Cys-108, His-111, and Cys-179 each coordinate Zn(2+).

It belongs to the GTP cyclohydrolase I family. In terms of assembly, toroid-shaped homodecamer, composed of two pentamers of five dimers.

It catalyses the reaction GTP + H2O = 7,8-dihydroneopterin 3'-triphosphate + formate + H(+). It functions in the pathway cofactor biosynthesis; 7,8-dihydroneopterin triphosphate biosynthesis; 7,8-dihydroneopterin triphosphate from GTP: step 1/1. This Shewanella denitrificans (strain OS217 / ATCC BAA-1090 / DSM 15013) protein is GTP cyclohydrolase 1.